We begin with the raw amino-acid sequence, 295 residues long: MRARLPLNALRAFEASARYLNFTKAGLELHVSQAAVSQQVRTLEQMLGVALFTRVPRGLQLTDEGMHLLPSITEALQMMSSAMDKFHEGKIKEVLTIAVVGTFAIGWLLPRITAFLNENPWIDIRILTHNNVVNLAAEGIDASIRFGTGGWINTENILLFQAPHTVLCSPETSKKLYIPSDLKKVCLLRSYRKEEWNNWFKAAGIDPWTITGPIFDSTRLMIDAVKLGDYAALVPYHMFQKELNERSVAKPFEIYATLGGYWLTLQKSRVNHNSEALNVFKEWIIEHSREFVLKS.

An HTH lysR-type domain is found at 5-62; it reads LPLNALRAFEASARYLNFTKAGLELHVSQAAVSQQVRTLEQMLGVALFTRVPRGLQLT. A DNA-binding region (H-T-H motif) is located at residues 22–41; sequence FTKAGLELHVSQAAVSQQVR.

It belongs to the LysR transcriptional regulatory family.

This protein is a positive regulator of gene expression of carbapenem-hydrolyzing beta-lactamase (NmcA). The polypeptide is Carbapenem-hydrolyzing beta-lactamase transcriptional activator (nmcR) (Enterobacter cloacae).